Here is a 751-residue protein sequence, read N- to C-terminus: SKI family transcriptional corepressor 1 homolog-B (751 aa).

5 disordered regions span residues 1–30 (MESIPNQLPAGRDSSCSPNSKDLQSYSGPP), 234–267 (SRKRTLPIGRSESSPSQPPRGQTQGEPSDVPHKT), 386–434 (LDVS…GIPP), 459–569 (YGNR…HGNK), and 600–635 (QRETSVKDVHEEEPSSTVEEMEPKNHQDENNISEER). 2 stretches are compositionally biased toward polar residues: residues 14 to 27 (SSCSPNSKDLQSYS) and 244 to 259 (SESSPSQPPRGQTQGE). Positions 416 to 428 (RNEEDKSGDESRS) are enriched in basic and acidic residues. The span at 479 to 491 (SESSSYRSVSPDV) shows a compositional bias: low complexity. Positions 539–558 (QENTQMHTLNDLHSTNSSET) are enriched in polar residues. 3 stretches are compositionally biased toward basic and acidic residues: residues 559–569 (RPSDMESHGNK), 603–612 (TSVKDVHEEE), and 620–635 (MEPKNHQDENNISEER). A coiled-coil region spans residues 666-704 (SMAKEELQKQLVEQVELRKKLEREFQNLKDSFQDQMKRE).

It belongs to the SKI family.

The protein resides in the nucleus. In terms of biological role, may inhibit BMP signaling. The polypeptide is SKI family transcriptional corepressor 1 homolog-B (skor1b) (Danio rerio (Zebrafish)).